A 401-amino-acid polypeptide reads, in one-letter code: MLARRKPVLPALTINPTIAEGPSPTSEGASEANLVDLQKKLEELDLDEQQRKRLEAFLTQKAKVGELKDDDFERISELGAGNGGVVTKARHRPSGLIMARKLIHLEIKPAVRNQIIRELQVLHECNSPYIVGFYGAFYSDGEISICMEHMDGGSLDQVLKEAKRIPEDILGKVSIAVLRGLAYLREKHQIMHRDVKPSNILVNSRGEIKLCDFGVSGQLIDSMANSFVGTRSYMSPERLQGTHYSVQSDIWSMGLSLVELAIGRYPIPPPDAKELEASFGRPVVDGADGEPHSVSPRPRPPGRPISVGHGMDSRPAMAIFELLDYIVNEPPPKLPSGVFSSDFQEFVNKCLIKNPAERADLKLLMNHAFIKRSEGEEVDFAGWLCRTLRLKQPSTPTRTAV.

Methionine 1 is subject to N-acetylmethionine. Position 23 is a phosphoserine (serine 23). One can recognise a Protein kinase domain in the interval 72–370 (FERISELGAG…LKLLMNHAFI (299 aa)). ATP is bound by residues 78-86 (LGAGNGGVV) and lysine 101. Aspartate 194 (proton acceptor) is an active-site residue. Residues serine 222 and serine 226 each carry the phosphoserine; by RAF modification. A disordered region spans residues 282–310 (PVVDGADGEPHSVSPRPRPPGRPISVGHG). Residues serine 293, serine 295, and serine 306 each carry the phosphoserine modification. 2 positions are modified to phosphothreonine: threonine 395 and threonine 397.

It belongs to the protein kinase superfamily. STE Ser/Thr protein kinase family. MAP kinase kinase subfamily. Interacts with MORG1. Interacts with SGK1. Interacts with KSR1. Interacts with KSR1 and BRAF; the interaction with KSR1 mediates KSR1-BRAF dimerization. Interacts with GLS. It depends on Mg(2+) as a cofactor. In terms of processing, phosphorylation on Ser/Thr by MAP kinase kinase kinases (RAF or MEKK1) positively regulates the kinase activity. Phosphorylated by MAP2K1/MEK1. Low levels of autophosphorylation have been observed. As to expression, expressed in adult intestine, kidney, liver, lung, pancreas, spleen, thymus, and at high levels in the neonatal brain. Lower expression is found in adult brain and heart.

It localises to the cytoplasm. It is found in the membrane. The catalysed reaction is L-seryl-[protein] + ATP = O-phospho-L-seryl-[protein] + ADP + H(+). The enzyme catalyses L-threonyl-[protein] + ATP = O-phospho-L-threonyl-[protein] + ADP + H(+). It carries out the reaction L-tyrosyl-[protein] + ATP = O-phospho-L-tyrosyl-[protein] + ADP + H(+). Inhibited by serine/threonine phosphatase 2A. Catalyzes the concomitant phosphorylation of a threonine and a tyrosine residue in a Thr-Glu-Tyr sequence located in MAP kinases. Activates the ERK1 and ERK2 MAP kinases. Activates BRAF in a KSR1 or KSR2-dependent manner; by binding to KSR1 or KSR2 releases the inhibitory intramolecular interaction between KSR1 or KSR2 protein kinase and N-terminal domains which promotes KSR1 or KSR2-BRAF dimerization and BRAF activation. This Mus musculus (Mouse) protein is Dual specificity mitogen-activated protein kinase kinase 2 (Map2k2).